Consider the following 233-residue polypeptide: Glycerol-3-phosphate acyltransferase 5 (233 aa).

The next 5 membrane-spanning stretches (helical) occupy residues 3–23, 69–89, 116–136, 143–163, and 168–188; these read LVFI…MAYL, MILL…VGLF, LVMA…FGLF, VFLG…FFGI, and TISW…LMAP.

This sequence belongs to the PlsY family. As to quaternary structure, probably interacts with PlsX.

Its subcellular location is the cell membrane. It catalyses the reaction an acyl phosphate + sn-glycerol 3-phosphate = a 1-acyl-sn-glycero-3-phosphate + phosphate. It functions in the pathway lipid metabolism; phospholipid metabolism. In terms of biological role, catalyzes the transfer of an acyl group from acyl-phosphate (acyl-PO(4)) to glycerol-3-phosphate (G3P) to form lysophosphatidic acid (LPA). This enzyme utilizes acyl-phosphate as fatty acyl donor, but not acyl-CoA or acyl-ACP. In Dehalococcoides mccartyi (strain ATCC BAA-2266 / KCTC 15142 / 195) (Dehalococcoides ethenogenes (strain 195)), this protein is Glycerol-3-phosphate acyltransferase 5.